Here is a 313-residue protein sequence, read N- to C-terminus: Aspartate carbamoyltransferase catalytic subunit (313 aa).

2 residues coordinate carbamoyl phosphate: arginine 54 and threonine 55. An L-aspartate-binding site is contributed by lysine 82. Carbamoyl phosphate is bound by residues arginine 104, histidine 132, and glutamine 135. Arginine 165 and arginine 219 together coordinate L-aspartate. 2 residues coordinate carbamoyl phosphate: glycine 260 and proline 261.

This sequence belongs to the aspartate/ornithine carbamoyltransferase superfamily. ATCase family. Heterododecamer (2C3:3R2) of six catalytic PyrB chains organized as two trimers (C3), and six regulatory PyrI chains organized as three dimers (R2).

It carries out the reaction carbamoyl phosphate + L-aspartate = N-carbamoyl-L-aspartate + phosphate + H(+). The protein operates within pyrimidine metabolism; UMP biosynthesis via de novo pathway; (S)-dihydroorotate from bicarbonate: step 2/3. In terms of biological role, catalyzes the condensation of carbamoyl phosphate and aspartate to form carbamoyl aspartate and inorganic phosphate, the committed step in the de novo pyrimidine nucleotide biosynthesis pathway. This is Aspartate carbamoyltransferase catalytic subunit from Thermobifida fusca (strain YX).